A 537-amino-acid chain; its full sequence is Cytochrome P450 734A5 (537 aa).

The helical transmembrane segment at 13–33 threads the bilayer; that stretch reads GAAAVAVAAAAAWVAVYAAAA. A heme-binding site is contributed by Cys-480.

It belongs to the cytochrome P450 family. Requires heme as cofactor. In terms of tissue distribution, exclusively expressed in roots.

The protein resides in the membrane. Cytochrome P450 probably involved in brassinosteroids (BRs) inactivation and regulation of BRs homeostasis. This Oryza sativa subsp. japonica (Rice) protein is Cytochrome P450 734A5 (CYP734A5).